Consider the following 126-residue polypeptide: DNA-directed RNA polymerase I subunit RPA12 (126 aa).

Zn(2+) contacts are provided by Cys-20, Cys-23, Cys-38, Cys-41, Cys-87, and Cys-90. The C4-type zinc-finger motif lies at 20–41 (CSDCGSVLPLPGAQDTVTCIRC). A TFIIS-type zinc finger spans residues 83-123 (VDRRCPRCGHEGMAYHTRQMRSADEGQTVFYTCTNCKFQEK). Positions 106–107 (DE) match the Hairpin motif. 2 residues coordinate Zn(2+): Cys-115 and Cys-118.

The protein belongs to the archaeal RpoM/eukaryotic RPA12/RPB9/RPC11 RNA polymerase family. Component of the RNA polymerase I (Pol I) complex consisting of 13 subunits: a ten-subunit catalytic core composed of POLR1A/RPA1, POLR1B/RPA2, POLR1C/RPAC1, POLR1D/RPAC2, POLR1H/RPA12, POLR2E/RPABC1, POLR2F/RPABC2, POLR2H/RPABC3, POLR2K/RPABC4 and POLR2L/RPABC5; a mobile stalk subunit POLR1F/RPA43 protruding from the core and additional subunits homologous to general transcription factors POLR1E/RPA49 and POLR1G/RPA34. Part of Pol I pre-initiation complex (PIC), in which Pol I core assembles with RRN3 and promoter-bound UTBF and SL1/TIF-IB complex.

It localises to the nucleus. Its subcellular location is the nucleolus. In terms of biological role, core component of RNA polymerase I (Pol I), a DNA-dependent RNA polymerase which synthesizes ribosomal RNA precursors using the four ribonucleoside triphosphates as substrates. Can mediate Pol I proofreading of the nascent RNA transcript. Anchors into the Pol I active site to monitor transcription fidelity and cleave mis-incorporated 5'-ribonucleotides. The protein is DNA-directed RNA polymerase I subunit RPA12 of Homo sapiens (Human).